We begin with the raw amino-acid sequence, 424 residues long: CinA-like protein (424 aa).

The protein belongs to the CinA family.

The chain is CinA-like protein from Syntrophobacter fumaroxidans (strain DSM 10017 / MPOB).